A 351-amino-acid polypeptide reads, in one-letter code: MMCDWVWLLLTLCSLLMIVQSLPTNLAEDTKKTEQTMRPKSKRAQEMLMFGNQQNHQPENNPSSSYSSTAEKRTLAASGLGGLKAALIEEEKPSRSNTLNNAFYDRKNYDYGAVNELGYEIPQVWDNSPYSRYYTNEDRRKRSEKSAVASGSSTTIKPSTTSFQSPTSTQQSVQTQVKRNVPIYQEPRFKRELDIDPEDVLTLLSLWENERRKRNWHKYMNEEYENVDDEDNLLEEEDSRNIIPWMDSSVYPPRHYSLDSLSPSDIGIIRTHPSSYYEQYENQYGQQYDTSQYGSPQYGLVYPQQTYYSAPEKRFMISRKRSQAYDPYSNAAQFQLSSQSRGYPYQHRLVY.

Positions 1 to 21 (MMCDWVWLLLTLCSLLMIVQS) are cleaved as a signal peptide. 2 consecutive propeptides follow at residues 22 to 177 (LPTN…QTQV) and 192 to 319 (ELDI…MISR). Over residues 51–69 (GNQQNHQPENNPSSSYSST) the composition is skewed to polar residues. Disordered regions lie at residues 51–71 (GNQQ…STAE) and 136–176 (NEDR…VQTQ). A compositionally biased stretch (basic and acidic residues) spans 136-145 (NEDRRKRSEK). Positions 158–176 (PSTTSFQSPTSTQQSVQTQ) are enriched in low complexity.

The protein resides in the secreted. This Apis mellifera (Honeybee) protein is Prohormone-2.